We begin with the raw amino-acid sequence, 465 residues long: Chromosomal replication initiator protein DnaA (465 aa).

Residues 1–87 (MLWTDCLTRL…RPGSILSSSE (87 aa)) form a domain I, interacts with DnaA modulators region. A disordered region spans residues 81-123 (SILSSSEQPATTTAALQTAPIPQPAKVKREPEPVANTAVSSKS). The segment covering 88–100 (QPATTTAALQTAP) has biased composition (low complexity). Residues 88 to 127 (QPATTTAALQTAPIPQPAKVKREPEPVANTAVSSKSSKKK) form a domain II region. The tract at residues 128-345 (LLNPQFTFSL…GALNKVVAIS (218 aa)) is domain III, AAA+ region. Gly-173, Gly-175, Lys-176, and Thr-177 together coordinate ATP. Residues 346–465 (RFKGAPIDLD…YKNLLRLLQS (120 aa)) form a domain IV, binds dsDNA region.

This sequence belongs to the DnaA family. In terms of assembly, oligomerizes as a right-handed, spiral filament on DNA at oriC.

It is found in the cytoplasm. Functionally, plays an essential role in the initiation and regulation of chromosomal replication. ATP-DnaA binds to the origin of replication (oriC) to initiate formation of the DNA replication initiation complex once per cell cycle. Binds the DnaA box (a 9 base pair repeat at the origin) and separates the double-stranded (ds)DNA. Forms a right-handed helical filament on oriC DNA; dsDNA binds to the exterior of the filament while single-stranded (ss)DNA is stabiized in the filament's interior. The ATP-DnaA-oriC complex binds and stabilizes one strand of the AT-rich DNA unwinding element (DUE), permitting loading of DNA polymerase. After initiation quickly degrades to an ADP-DnaA complex that is not apt for DNA replication. Binds acidic phospholipids. This chain is Chromosomal replication initiator protein DnaA, found in Acinetobacter baumannii (strain ATCC 17978 / DSM 105126 / CIP 53.77 / LMG 1025 / NCDC KC755 / 5377).